Consider the following 342-residue polypeptide: Paired box protein Pax-9 (342 aa).

The segment at residues 4 to 130 (AFGEVNQLGG…SSISRILRNK (127 aa)) is a DNA-binding region (paired). Positions 7–63 (EVNQLGGVFVNGRPLPNAIRLRIVELAQLGIRPCDISRQLRVSHGCVSKILARYNET) are PAI subdomain. The tract at residues 82–130 (TVVKHIRTYKQRDPGIFAWEIRDRLLADGVCDKYNVPSVSSISRILRNK) is RED subdomain. Residues 168–189 (AAAAKVPTPPGVPAIPGSVALP) form an interaction with KDM5B region.

As to quaternary structure, interacts with KDM5B.

It localises to the nucleus. Its function is as follows. Transcription factor required for normal development of thymus, parathyroid glands, ultimobranchial bodies, teeth, skeletal elements of skull and larynx as well as distal limbs. This Rattus norvegicus (Rat) protein is Paired box protein Pax-9.